Consider the following 279-residue polypeptide: Large ribosomal subunit protein uL2 (279 aa).

Disordered regions lie at residues 1–28 (MPAR…TKEK) and 221–279 (RGTV…GRRR). Over residues 12–22 (GRRNSSVLTRD) the composition is skewed to polar residues.

This sequence belongs to the universal ribosomal protein uL2 family. In terms of assembly, part of the 50S ribosomal subunit. Forms a bridge to the 30S subunit in the 70S ribosome.

Its function is as follows. One of the primary rRNA binding proteins. Required for association of the 30S and 50S subunits to form the 70S ribosome, for tRNA binding and peptide bond formation. It has been suggested to have peptidyltransferase activity; this is somewhat controversial. Makes several contacts with the 16S rRNA in the 70S ribosome. The polypeptide is Large ribosomal subunit protein uL2 (Rubrobacter xylanophilus (strain DSM 9941 / JCM 11954 / NBRC 16129 / PRD-1)).